Consider the following 227-residue polypeptide: MIRAILTDIEGTTSSLSFVKETLFPYARARMADFVRGHARDATVQALLADAKAAAGDPSMDDEHVIARLVRWIDEDRKITPLKALQGLIWEEGYRNRDFFGHVYDDAVRRLKAWHEQGISLYVFSSGSVHAQRLLFGHTAAGDLQPLFSGYFDTRIGAKQEPAAYSAIARELNLPPSEILFLSDIEAELDAAREAGYKTFMLVREGGAKASHHPQGADFDAIRPELL.

Belongs to the HAD-like hydrolase superfamily. MasA/MtnC family. In terms of assembly, monomer. The cofactor is Mg(2+).

The enzyme catalyses 5-methylsulfanyl-2,3-dioxopentyl phosphate + H2O = 1,2-dihydroxy-5-(methylsulfanyl)pent-1-en-3-one + phosphate. It functions in the pathway amino-acid biosynthesis; L-methionine biosynthesis via salvage pathway; L-methionine from S-methyl-5-thio-alpha-D-ribose 1-phosphate: step 3/6. Its pathway is amino-acid biosynthesis; L-methionine biosynthesis via salvage pathway; L-methionine from S-methyl-5-thio-alpha-D-ribose 1-phosphate: step 4/6. In terms of biological role, bifunctional enzyme that catalyzes the enolization of 2,3-diketo-5-methylthiopentyl-1-phosphate (DK-MTP-1-P) into the intermediate 2-hydroxy-3-keto-5-methylthiopentenyl-1-phosphate (HK-MTPenyl-1-P), which is then dephosphorylated to form the acireductone 1,2-dihydroxy-3-keto-5-methylthiopentene (DHK-MTPene). The polypeptide is Enolase-phosphatase E1 (Methylococcus capsulatus (strain ATCC 33009 / NCIMB 11132 / Bath)).